Here is a 105-residue protein sequence, read N- to C-terminus: Large ribosomal subunit protein eL30 (105 aa).

This sequence belongs to the eukaryotic ribosomal protein eL30 family.

The chain is Large ribosomal subunit protein eL30 (RPL30) from Trypanosoma brucei brucei.